The chain runs to 477 residues: UDP-N-acetylmuramate--L-alanine ligase (477 aa).

125–131 is a binding site for ATP; that stretch reads GTHGKTT.

The protein belongs to the MurCDEF family.

It localises to the cytoplasm. It carries out the reaction UDP-N-acetyl-alpha-D-muramate + L-alanine + ATP = UDP-N-acetyl-alpha-D-muramoyl-L-alanine + ADP + phosphate + H(+). Its pathway is cell wall biogenesis; peptidoglycan biosynthesis. Cell wall formation. The protein is UDP-N-acetylmuramate--L-alanine ligase of Acidothermus cellulolyticus (strain ATCC 43068 / DSM 8971 / 11B).